A 356-amino-acid polypeptide reads, in one-letter code: Serpentine receptor class epsilon-29 (356 aa).

Helical transmembrane passes span 29 to 49, 61 to 81, 119 to 139, 161 to 181, 190 to 210, 251 to 271, and 281 to 301; these read IVELFSYLICAYILTLNIYII, ILAIPLFGIWFELIIGKLITI, LLIFGGFLQWHYMFTIIFGVL, LFIPLFLTVISQFLSISTSLA, FLAQLPWIICCPFSAMAYFFV, LVFVVLSCIALCGIGITALFY, and FVENFLFLHPYLSCLTAIFSV.

The protein belongs to the nematode receptor-like protein sre family.

Its subcellular location is the membrane. In Caenorhabditis elegans, this protein is Serpentine receptor class epsilon-29 (sre-29).